The sequence spans 472 residues: Minor capsid protein L2 (472 aa).

The short motif at 1 to 14 (MRRKRDTHIRRKRA) is the Nuclear localization signal element. Cysteine 23 and cysteine 29 are disulfide-bonded. The short motif at 454 to 462 (VIPRKRKRL) is the Nuclear localization signal element.

It belongs to the papillomaviridae L2 protein family. In terms of assembly, interacts with major capsid protein L1. Interacts with E2; this interaction inhibits E2 transcriptional activity but not the DNA replication function E2. Interacts with host GADD45GIP1. Interacts with host HSPA8; this interaction is required for L2 nuclear translocation. Interacts with host importins KPNB2 and KPNB3. Forms a complex with importin alpha2-beta1 heterodimers via interaction with the importin alpha2 adapter. Interacts with host DYNLT1; this interaction is essential for virus intracellular transport during entry. Interacts (via C-terminus) with host retromer subunits VPS35 and VPS29. Highly phosphorylated.

The protein resides in the virion. Its subcellular location is the host nucleus. It is found in the host early endosome. The protein localises to the host Golgi apparatus. Functionally, minor protein of the capsid that localizes along the inner surface of the virion, within the central cavities beneath the L1 pentamers. Plays a role in capsid stabilization through interaction with the major capsid protein L1. Once the virion enters the host cell, L2 escorts the genomic DNA into the nucleus by promoting escape from the endosomal compartments and traffic through the host Golgi network. Mechanistically, the C-terminus of L2 possesses a cell-penetrating peptide that protudes from the host endosome, interacts with host cytoplasmic retromer cargo and thereby mediates the capsid delivery to the host trans-Golgi network. Plays a role through its interaction with host dynein in the intracellular microtubule-dependent transport of viral capsid toward the nucleus. Mediates the viral genome import into the nucleus through binding to host importins. Once within the nucleus, L2 localizes viral genomes to host PML bodies in order to activate early gene expression for establishment of infection. Later on, promotes late gene expression by interacting with the viral E2 protein and by inhibiting its transcriptional activation functions. During virion assembly, encapsidates the genome by direct interaction with the viral DNA. This is Minor capsid protein L2 from Human papillomavirus type 34.